We begin with the raw amino-acid sequence, 172 residues long: Disulfide bond formation protein B (172 aa).

Residues 1-11 (MNPFRWSFRAQ) are Cytoplasmic-facing. Residues 12–28 (FLLGFLACAGLLAYAIY) traverse the membrane as a helical segment. Residues 29–46 (VQLHLGLEPCPLCIFQRI) lie on the Periplasmic side of the membrane. Residues Cys-38 and Cys-41 are joined by a disulfide bond. The chain crosses the membrane as a helical span at residues 47–63 (AFAALAVFFLLGALHGP). Topologically, residues 64 to 70 (RAAAGRK) are cytoplasmic. A helical membrane pass occupies residues 71 to 88 (VYGVLSFIAAGVGMGIAA). Residues 89–145 (RHVWVQIRPKDMMSSCGPPLSFLSETMGPFEVFRTVLTGTGDCGNIDWRFLGLSMPM) lie on the Periplasmic side of the membrane. Cysteines 104 and 131 form a disulfide. The helical transmembrane segment at 146–164 (WSMVWFVGLALWALYAGFK) threads the bilayer. Residues 165 to 172 (VRRSSVHH) are Cytoplasmic-facing.

It belongs to the DsbB family.

It localises to the cell inner membrane. Its function is as follows. Required for disulfide bond formation in some periplasmic proteins. Acts by oxidizing the DsbA protein. The sequence is that of Disulfide bond formation protein B from Xanthomonas axonopodis pv. citri (strain 306).